The following is a 216-amino-acid chain: FGFR1 oncogene partner 2 homolog (216 aa).

Coiled coils occupy residues 33 to 102 (TTTL…LIMS) and 131 to 185 (SKEL…ITRA). Residues 193-216 (EDAAESSSHSASSVPNTDLSLRKS) are disordered. The segment covering 206-216 (VPNTDLSLRKS) has biased composition (polar residues).

The protein belongs to the SIKE family.

It localises to the cytoplasm. The polypeptide is FGFR1 oncogene partner 2 homolog (fgfr1op2) (Xenopus tropicalis (Western clawed frog)).